The chain runs to 227 residues: 2-C-methyl-D-erythritol 4-phosphate cytidylyltransferase (227 aa).

This sequence belongs to the IspD/TarI cytidylyltransferase family. IspD subfamily.

The enzyme catalyses 2-C-methyl-D-erythritol 4-phosphate + CTP + H(+) = 4-CDP-2-C-methyl-D-erythritol + diphosphate. It functions in the pathway isoprenoid biosynthesis; isopentenyl diphosphate biosynthesis via DXP pathway; isopentenyl diphosphate from 1-deoxy-D-xylulose 5-phosphate: step 2/6. Catalyzes the formation of 4-diphosphocytidyl-2-C-methyl-D-erythritol from CTP and 2-C-methyl-D-erythritol 4-phosphate (MEP). The polypeptide is 2-C-methyl-D-erythritol 4-phosphate cytidylyltransferase (Thermosipho melanesiensis (strain DSM 12029 / CIP 104789 / BI429)).